We begin with the raw amino-acid sequence, 415 residues long: Imidazolonepropionase (415 aa).

Residues His-74 and His-76 each contribute to the Fe(3+) site. The Zn(2+) site is built by His-74 and His-76. The 4-imidazolone-5-propanoate site is built by Arg-83, Tyr-146, and His-179. Tyr-146 provides a ligand contact to N-formimidoyl-L-glutamate. His-244 contacts Fe(3+). His-244 contributes to the Zn(2+) binding site. A 4-imidazolone-5-propanoate-binding site is contributed by Gln-247. Asp-319 contributes to the Fe(3+) binding site. Zn(2+) is bound at residue Asp-319. Residues Asn-321 and Gly-323 each contribute to the N-formimidoyl-L-glutamate site. Thr-324 lines the 4-imidazolone-5-propanoate pocket.

The protein belongs to the metallo-dependent hydrolases superfamily. HutI family. Zn(2+) serves as cofactor. The cofactor is Fe(3+).

It is found in the cytoplasm. The enzyme catalyses 4-imidazolone-5-propanoate + H2O = N-formimidoyl-L-glutamate. The protein operates within amino-acid degradation; L-histidine degradation into L-glutamate; N-formimidoyl-L-glutamate from L-histidine: step 3/3. Functionally, catalyzes the hydrolytic cleavage of the carbon-nitrogen bond in imidazolone-5-propanoate to yield N-formimidoyl-L-glutamate. It is the third step in the universal histidine degradation pathway. This chain is Imidazolonepropionase, found in Cupriavidus metallidurans (strain ATCC 43123 / DSM 2839 / NBRC 102507 / CH34) (Ralstonia metallidurans).